A 279-amino-acid chain; its full sequence is Thermitase (279 aa).

Asp5 is a binding site for Ca(2+). Residues 12-277 (QYGPQKIQAP…KGRVNAYKAV (266 aa)) enclose the Peptidase S8 domain. Asp38 functions as the Charge relay system in the catalytic mechanism. Positions 47, 57, 60, 62, 64, and 66 each coordinate Ca(2+). His71 serves as the catalytic Charge relay system. 4 residues coordinate Ca(2+): Val82, Asn85, Thr87, and Ile89. Na(+) is bound by residues Ala173, Tyr175, and Ala178. Residues Val199 and Asp201 each contribute to the Ca(2+) site. Residue Asp201 coordinates Na(+). Ser225 serves as the catalytic Charge relay system.

Belongs to the peptidase S8 family. Ca(2+) is required as a cofactor. It depends on Na(+) as a cofactor.

It localises to the secreted. It carries out the reaction Hydrolysis of proteins, including collagen.. This is Thermitase from Thermoactinomyces vulgaris.